The following is a 140-amino-acid chain: Mediator of RNA polymerase II transcription subunit 21 (140 aa).

Residues 52–130 (EERERTLEEL…CDELILKLAQ (79 aa)) adopt a coiled-coil conformation.

Belongs to the Mediator complex subunit 21 family. As to quaternary structure, component of the Mediator complex.

Its subcellular location is the nucleus. Component of the Mediator complex, a coactivator involved in the regulated transcription of nearly all RNA polymerase II-dependent genes. Mediator functions as a bridge to convey information from gene-specific regulatory proteins to the basal RNA polymerase II transcription machinery. Mediator is recruited to promoters by direct interactions with regulatory proteins and serves as a scaffold for the assembly of a functional preinitiation complex with RNA polymerase II and the general transcription factors. The protein is Mediator of RNA polymerase II transcription subunit 21 (SRB7) of Yarrowia lipolytica (strain CLIB 122 / E 150) (Yeast).